Consider the following 921-residue polypeptide: Isoleucine--tRNA ligase (921 aa).

The 'HIGH' region motif lies at 59–69 (PYANGHLHIGH). Glu-569 contacts L-isoleucyl-5'-AMP. A 'KMSKS' region motif is present at residues 610–614 (KMSKS). ATP is bound at residue Lys-613. Positions 896, 899, 911, and 914 each coordinate Zn(2+).

The protein belongs to the class-I aminoacyl-tRNA synthetase family. IleS type 1 subfamily. As to quaternary structure, monomer. Zn(2+) is required as a cofactor.

Its subcellular location is the cytoplasm. It carries out the reaction tRNA(Ile) + L-isoleucine + ATP = L-isoleucyl-tRNA(Ile) + AMP + diphosphate. Its function is as follows. Catalyzes the attachment of isoleucine to tRNA(Ile). As IleRS can inadvertently accommodate and process structurally similar amino acids such as valine, to avoid such errors it has two additional distinct tRNA(Ile)-dependent editing activities. One activity is designated as 'pretransfer' editing and involves the hydrolysis of activated Val-AMP. The other activity is designated 'posttransfer' editing and involves deacylation of mischarged Val-tRNA(Ile). This Campylobacter hominis (strain ATCC BAA-381 / DSM 21671 / CCUG 45161 / LMG 19568 / NCTC 13146 / CH001A) protein is Isoleucine--tRNA ligase.